A 521-amino-acid chain; its full sequence is Cytoplasmic polyadenylation element-binding protein 2 (521 aa).

Residues 1 to 11 (MNLPQQQPPAA) are compositionally biased toward pro residues. Disordered stretches follow at residues 1–35 (MNLPQQQPPAAAPQQPQSRRSPVSPQLQQQHQAAA) and 50–88 (PLLKQSPWSNHQNSGWGTASMSWGAMHGRDHRRSGNMGI). Residues 12–35 (APQQPQSRRSPVSPQLQQQHQAAA) show a composition bias toward low complexity. A Phosphoserine modification is found at S21. The span at 55 to 70 (SPWSNHQNSGWGTASM) shows a compositional bias: polar residues. 2 RRM domains span residues 264 to 355 (RKVF…PWNL) and 372 to 454 (KTIF…PYVL).

Belongs to the RRM CPEB family. Interacts with TENT2/GLD2. In terms of tissue distribution, expressed in embryo, cerebellum, salivary gland, thymus, heart, liver, lung, spleen, kidney, intestine, ovary and round spermatids. Weakly expressed in granular cells of dentate gyrus and the pyramidal cells of CA3 and CA1 of the hippocampus.

The protein resides in the cytoplasm. In terms of biological role, may play a role in translational regulation of stored mRNAs in transcriptionally inactive haploid spermatids. Binds to poly(U) RNA oligomers. Required for cell cycle progression, specifically for the transition from metaphase to anaphase. The sequence is that of Cytoplasmic polyadenylation element-binding protein 2 (Cpeb2) from Mus musculus (Mouse).